The following is a 460-amino-acid chain: Nuclear distribution protein PAC1 (460 aa).

One can recognise a LisH domain in the interval 9-41 (QAEELHKSIIAYLAANNLQDSANAMRTELGLGE). Positions 61-88 (TSVVRLQKKIMDLEAQTQTLQTELNSAT) form a coiled coil. Positions 82–92 (TELNSATPTSN) are enriched in polar residues. The segment at 82 to 105 (TELNSATPTSNRRGDPSSWLPAGP) is disordered. WD repeat units lie at residues 112 to 153 (SHRT…RTVK), 155 to 195 (HTKA…QNIR), 199 to 246 (GHDH…CVKT), 249 to 288 (GHADWIRDVSPSLDGKYLLSTGNDRTVRLWDISVPNPEAK), 293 to 354 (GHEH…KTLI), 355 to 394 (GHDNWVRGLVFHPSGKFLLSVSDDKTIRCWDLSQEGKCVK), and 399 to 456 (SHEH…MSLR). Positions 414–433 (IKDKGPGEETNGDVGTPKKA) are disordered.

This sequence belongs to the WD repeat LIS1/nudF family. In terms of assembly, self-associates. Interacts with NDL1 and dynein.

Its subcellular location is the cytoplasm. The protein localises to the cytoskeleton. It is found in the spindle pole. Functionally, positively regulates the activity of the minus-end directed microtubule motor protein dynein. May enhance dynein-mediated microtubule sliding by targeting dynein to the microtubule plus end. Required for nuclear migration during vegetative growth as well as development. Required for retrograde early endosome (EE) transport from the hyphal tip. Required for localization of dynein to the mitotic spindle poles. Recruits additional proteins to the dynein complex at SPBs. In Gibberella zeae (strain ATCC MYA-4620 / CBS 123657 / FGSC 9075 / NRRL 31084 / PH-1) (Wheat head blight fungus), this protein is Nuclear distribution protein PAC1.